Reading from the N-terminus, the 392-residue chain is Heat-inducible transcription repressor HrcA (392 aa).

The protein belongs to the HrcA family.

Functionally, negative regulator of class I heat shock genes (grpE-dnaK-dnaJ and groELS operons). Prevents heat-shock induction of these operons. The sequence is that of Heat-inducible transcription repressor HrcA from Chlamydia trachomatis serovar A (strain ATCC VR-571B / DSM 19440 / HAR-13).